The following is a 524-amino-acid chain: Cytochrome P450 monooxygenase ankB (524 aa).

Residues 22-42 (FHALSIQAPGLLLGTLLFYLF) traverse the membrane as a helical segment. C466 contacts heme.

This sequence belongs to the cytochrome P450 family. Heme is required as a cofactor.

Its subcellular location is the membrane. It catalyses the reaction cyclo(L-arginyl-tyrosyl) + reduced [NADPH--hemoprotein reductase] + O2 = cyclo(L-arginyl-L-dehydrotyrosyl) + oxidized [NADPH--hemoprotein reductase] + 2 H2O + H(+). It participates in alkaloid biosynthesis. Its function is as follows. Cytochrome P450 monooxygenase; part of the ank cluster that mediates the biosynthesis of NK13650 C, a highly modified cyclo-arginine-tyrosine dipeptide. AnkB is responsible for desaturation of the ankA product cyclo-Arg-Tyr diketopiperazine, likely through hydroxylation of the benzylic position followed by dehydration to yield a dehydro-cyclodipeptide. Within the pathway, the cyclodipeptide synthase ankA acts as the scaffold-generating enzyme and is responsible for formation of the cyclo-Arg-Tyr diketopiperazine (cRY) from L-Arg and L-Tyr. The ankA product cRY is desaturated by the cytochrome P450 monooxygenase ankB to yield a dehydro-cyclodipeptide intermediate. The FAD-dependent monooxygenase ankC then installs the m-OH, ankD catalyzes the attachment of L-homoserine, and ankE ligates citrate to the ankD product to yield NK13650 B. The O-methyltransferase ankF is responsible for methylation of the C-17 phenol group of NK13650 B to produce NK13650 D. Amidation of NK13650 D with L-Asp by ankG then leads to the production of NK13650 C, whereas amidation of NK13650 B produces NK13650 A. The protein is Cytochrome P450 monooxygenase ankB of Aspergillus thermomutatus (Neosartorya pseudofischeri).